Reading from the N-terminus, the 236-residue chain is Opacity protein opA50 (236 aa).

Ala1 is a signal peptide.

It belongs to the opacity porin family.

It localises to the cell outer membrane. Functionally, implicated in a number of adherence functions. OPA proteins are implicated in pathogenesis and are subject to phase variation. This chain is Opacity protein opA50 (opaC), found in Neisseria gonorrhoeae.